The sequence spans 223 residues: Adenylate kinase 4, mitochondrial (223 aa).

Glycine 15–threonine 20 contacts a ribonucleoside 5'-triphosphate. An NMP region spans residues serine 35–valine 64. Positions 36 and 41 each coordinate AMP. Position 60 is an N6-succinyllysine (lysine 60). Residues leucine 62 to valine 64, glycine 89 to arginine 92, and glutamine 96 each bind AMP. Residues arginine 125–aspartate 162 are LID. A ribonucleoside 5'-triphosphate contacts are provided by residues arginine 126 and valine 135 to tyrosine 136. Arginine 170 serves as a coordination point for AMP. The residue at position 175 (lysine 175) is an N6-acetyllysine. Lysine 179 and lysine 186 each carry N6-acetyllysine; alternate. N6-succinyllysine; alternate occurs at positions 179 and 186. Residue threonine 199 coordinates a ribonucleoside 5'-triphosphate.

The protein belongs to the adenylate kinase family. AK3 subfamily. Monomer. Interacts with SLC25A5/ANT2. As to expression, expressed in kidney, liver, stomach, brain, spinal cord, heart, ovary, oviduct, colon, jejunum, ileum and testis (at protein level). In the brain, expressed in the pyramidal cells of the cerebrum and glial cells in the cerebellum (at protein level). In the heart, expressed by myocytes (at protein level). In the kidney, expressed in the proximal to distal tubule in the cortex and the outer and inner zones of the medulla (at protein level). In the stomach, expressed in stratified squamous epithelia in the forestomach and in the gastric pit and mucus producing cells of the glandular stomach (at protein level). Expressed in epithelial cells of the jejunum, ileum, and colon (at protein level). In the testis, expressed by spermatocytes (at protein level). In the ovaries, expressed by oocytes, follicular epithelial cells, and corpus luteum cells (at protein level). In the oviduct, expressed in the epithelia of the isthmus and the ciliated cells of the ampulla (at protein level). Expressed in the pyramidal cells in the hippocampus.

The protein resides in the mitochondrion matrix. The catalysed reaction is a ribonucleoside 5'-phosphate + ATP = a ribonucleoside 5'-diphosphate + ADP. It carries out the reaction AMP + ATP = 2 ADP. It catalyses the reaction GTP + AMP = GDP + ADP. The enzyme catalyses CMP + ATP = CDP + ADP. The catalysed reaction is GTP + CMP = CDP + GDP. It carries out the reaction dAMP + ATP = dADP + ADP. It catalyses the reaction dCMP + ATP = dCDP + ADP. The enzyme catalyses a 2'-deoxyribonucleoside 5'-diphosphate + ATP = a 2'-deoxyribonucleoside 5'-triphosphate + ADP. The catalysed reaction is a ribonucleoside 5'-diphosphate + ATP = a ribonucleoside 5'-triphosphate + ADP. It carries out the reaction GDP + ATP = GTP + ADP. It catalyses the reaction CDP + GTP = CTP + GDP. The enzyme catalyses CDP + ATP = CTP + ADP. The catalysed reaction is UDP + ATP = UTP + ADP. It carries out the reaction GTP + UDP = UTP + GDP. It catalyses the reaction dADP + GTP = dATP + GDP. The enzyme catalyses dCDP + GTP = dCTP + GDP. The catalysed reaction is dCDP + ATP = dCTP + ADP. It carries out the reaction dGDP + ATP = dGTP + ADP. It catalyses the reaction dTDP + GTP = dTTP + GDP. The enzyme catalyses dTDP + ATP = dTTP + ADP. Broad-specificity mitochondrial nucleoside phosphate kinase involved in cellular nucleotide homeostasis by catalyzing nucleoside-phosphate interconversions. Similar to other adenylate kinases, preferentially catalyzes the phosphorylation of the nucleoside monophosphate AMP with ATP as phosphate donor to produce ADP. Phosphorylates only AMP when using GTP as phosphate donor. In vitro, can also catalyze the phosphorylation of CMP, dAMP and dCMP and use GTP as an alternate phosphate donor. Moreover, exhibits a diphosphate kinase activity, producing ATP, CTP, GTP, UTP, TTP, dATP, dCTP and dGTP from the corresponding diphosphate substrates with either ATP or GTP as phosphate donors. Plays a role in controlling cellular ATP levels by regulating phosphorylation and activation of the energy sensor protein kinase AMPK. Plays a protective role in the cellular response to oxidative stress. The polypeptide is Adenylate kinase 4, mitochondrial (Mus musculus (Mouse)).